We begin with the raw amino-acid sequence, 260 residues long: Adenosylcobinamide-GDP ribazoletransferase (260 aa).

7 helical membrane passes run 42-62 (PLAG…ANAI), 64-84 (LPPL…TGAL), 117-137 (FAAL…MAII), 144-164 (YALL…LAFW), 192-212 (GLGL…VALI), 214-234 (ALVL…AKIG), and 240-260 (TLGA…VMAL).

This sequence belongs to the CobS family. Mg(2+) serves as cofactor.

The protein localises to the cell inner membrane. The catalysed reaction is alpha-ribazole + adenosylcob(III)inamide-GDP = adenosylcob(III)alamin + GMP + H(+). It catalyses the reaction alpha-ribazole 5'-phosphate + adenosylcob(III)inamide-GDP = adenosylcob(III)alamin 5'-phosphate + GMP + H(+). The protein operates within cofactor biosynthesis; adenosylcobalamin biosynthesis; adenosylcobalamin from cob(II)yrinate a,c-diamide: step 7/7. Its function is as follows. Joins adenosylcobinamide-GDP and alpha-ribazole to generate adenosylcobalamin (Ado-cobalamin). Also synthesizes adenosylcobalamin 5'-phosphate from adenosylcobinamide-GDP and alpha-ribazole 5'-phosphate. The sequence is that of Adenosylcobinamide-GDP ribazoletransferase from Brucella ovis (strain ATCC 25840 / 63/290 / NCTC 10512).